Here is a 227-residue protein sequence, read N- to C-terminus: Calcium-binding protein 1 (227 aa).

Glycine 2 carries N-myristoyl glycine lipidation. Cysteine 4 carries the S-palmitoyl cysteine lipid modification. EF-hand domains follow at residues 82–117 (EEIEELREAFREFDKDKDGYINCRDLGNCMRTMGYM), 136–153 (GHVDFDDFVELMGPKLLA), 159–194 (IGVKELRDAFREFDTNGDGEISTSELREAMRKLLGH), and 196–227 (VGHRDIEEIIRDVDLNGDGRVDFEEFVRMMSR). Aspartate 95, aspartate 97, aspartate 99, tyrosine 101, and aspartate 106 together coordinate Ca(2+). Ca(2+) contacts are provided by aspartate 172, asparagine 174, aspartate 176, and glutamate 178. Serine 180 carries the post-translational modification Phosphoserine. Positions 183, 209, 211, 213, 215, and 220 each coordinate Ca(2+).

Homodimer; when bound to calcium or magnesium. Interacts (via C-terminus) with ITPR1, ITPR2 and ITPR3. This binding is calcium dependent and the interaction correlates with calcium concentration. An additional calcium-independent interaction with the N-terminus of ITPR1 results in a decreased InsP(3) binding to the receptor. Interacts with CACNA1A (via C-terminal CDB motif) in the pre- and postsynaptic membranes. Interacts with CACNA1D and CACNA1C (via C-terminal C and IQ motifs). The binding to the C motif is calcium independent whereas the binding to IQ requires the presence of calcium and is mutually exclusive with calmodulin binding. Interacts with TRPC5 (via C-terminus). Interacts (via EF-hands 1 and 2) at microtubules with MAP1LC3B. Interacts with MYO1C. Interacts (via EF-hands 1 and 2) with NSMF (via the central NLS-containing motif region), the interaction occurs in a calcium dependent manner after synaptic NMDA receptor stimulation and prevents nuclear import of NSMF. Interacts with SPACA9 homolog. Phosphorylated. The phosphorylation regulates the activity. Expressed in the inner retina, specifically in amacrine cells and in cone OFF-bipolar cells (at protein level).

Modulates calcium-dependent activity of inositol 1,4,5-triphosphate receptors (ITPRs). Inhibits agonist-induced intracellular calcium signaling. Enhances inactivation and does not support calcium-dependent facilitation of voltage-dependent P/Q-type calcium channels. Causes calcium-dependent facilitation and inhibits inactivation of L-type calcium channels by binding to the same sites as calmodulin in the C-terminal domain of CACNA1C, but has an opposite effect on channel function. Suppresses the calcium-dependent inactivation of CACNA1D. Inhibits TRPC5 channels. Prevents NMDA receptor-induced cellular degeneration. Required for the normal transfer of light signals through the retina. This chain is Calcium-binding protein 1 (Cabp1), found in Mus musculus (Mouse).